Here is a 259-residue protein sequence, read N- to C-terminus: L-cysteine S-thiosulfotransferase subunit SoxA (259 aa).

Residues 1–23 (MRKLWFLPILLGAVGGVSLYAIA) form the signal peptide. The region spanning 50-135 (VYAEQGRDMF…SIATYVATLS (86 aa)) is the Cytochrome c domain. Residues Cys70, Cys73, His74, Cys108, Cys171, Cys174, and His175 each contribute to the heme c site. Arg216 contacts substrate. Cys220 is a binding site for heme c. Catalysis depends on Cys220, which acts as the Cysteine persulfide intermediate.

This sequence belongs to the SoxA family. Heterodimer of SoxA and SoxX. Heme c serves as cofactor. Post-translationally, cysteine persulfide at Cys-220.

It is found in the periplasm. It carries out the reaction L-cysteinyl-[SoxY protein] + thiosulfate + 2 Fe(III)-[cytochrome c] = S-sulfosulfanyl-L-cysteinyl-[SoxY protein] + 2 Fe(II)-[cytochrome c] + 2 H(+). It catalyses the reaction S-sulfanyl-L-cysteinyl-[SoxY protein] + thiosulfate + 2 Fe(III)-[cytochrome c] = S-(2-sulfodisulfanyl)-L-cysteinyl-[SoxY protein] + 2 Fe(II)-[cytochrome c] + 2 H(+). Functionally, C-type diheme cytochrome, which is part of the SoxAX cytochrome complex involved in sulfur oxidation. The SoxAX complex catalyzes the formation of a heterodisulfide bond between the conserved cysteine residue on a sulfur carrier SoxYZ complex subunit SoxY and thiosulfate or other inorganic sulfur substrates. This leads to the liberation of two electrons, which may be transferred from the SoxAX complex to another cytochrome c that then channels them into the respiratory electron transport chain. Some electrons may be used for reductive CO(2) fixation. This Hydrogenobacter thermophilus (strain DSM 6534 / IAM 12695 / TK-6) protein is L-cysteine S-thiosulfotransferase subunit SoxA.